The chain runs to 301 residues: Probable alpha-L-glutamate ligase 2 (301 aa).

One can recognise an ATP-grasp domain in the interval 104–287 (LQLLSRKGIG…VAEPIVEYIE (184 aa)). ATP-binding positions include Lys-141, 178–179 (EY), Asp-187, and 211–213 (RSN). Positions 248, 260, and 262 each coordinate Mg(2+). Mn(2+) is bound by residues Asp-248, Glu-260, and Asn-262.

Belongs to the RimK family. The cofactor is Mg(2+). It depends on Mn(2+) as a cofactor.

The sequence is that of Probable alpha-L-glutamate ligase 2 from Shewanella amazonensis (strain ATCC BAA-1098 / SB2B).